Reading from the N-terminus, the 141-residue chain is Hemoglobin subunit alpha-1/2 (141 aa).

In terms of domain architecture, Globin spans 1 to 141 (VLSPADKTNV…VSTVLTSKYR (141 aa)). A Phosphoserine modification is found at Ser-3. N6-succinyllysine is present on Lys-7. The residue at position 8 (Thr-8) is a Phosphothreonine. Lys-11 bears the N6-succinyllysine mark. The residue at position 16 (Lys-16) is an N6-acetyllysine; alternate. Lys-16 carries the post-translational modification N6-succinyllysine; alternate. Residue Tyr-24 is modified to Phosphotyrosine. Position 35 is a phosphoserine (Ser-35). Lys-40 carries the post-translational modification N6-succinyllysine. Ser-49 bears the Phosphoserine mark. His-58 provides a ligand contact to O2. Residue His-87 participates in heme b binding. Phosphoserine is present on Ser-102. Position 108 is a phosphothreonine (Thr-108). Ser-124 is modified (phosphoserine). Residues Thr-134 and Thr-137 each carry the phosphothreonine modification. Residue Ser-138 is modified to Phosphoserine.

The protein belongs to the globin family. Heterotetramer of two alpha chains and two beta chains. As to expression, red blood cells.

Functionally, involved in oxygen transport from the lung to the various peripheral tissues. The protein is Hemoglobin subunit alpha-1/2 of Mustela lutreola (European mink).